Reading from the N-terminus, the 250-residue chain is Hydroxyacylglutathione hydrolase (250 aa).

Zn(2+) is bound by residues His52, His54, Asp56, His57, His107, Asp128, and His166.

The protein belongs to the metallo-beta-lactamase superfamily. Glyoxalase II family. As to quaternary structure, monomer. The cofactor is Zn(2+).

The enzyme catalyses an S-(2-hydroxyacyl)glutathione + H2O = a 2-hydroxy carboxylate + glutathione + H(+). Its pathway is secondary metabolite metabolism; methylglyoxal degradation; (R)-lactate from methylglyoxal: step 2/2. In terms of biological role, thiolesterase that catalyzes the hydrolysis of S-D-lactoyl-glutathione to form glutathione and D-lactic acid. In Neisseria meningitidis serogroup A / serotype 4A (strain DSM 15465 / Z2491), this protein is Hydroxyacylglutathione hydrolase.